We begin with the raw amino-acid sequence, 657 residues long: UvrABC system protein B (657 aa).

The Helicase ATP-binding domain maps to 25–182 (KSIKKGNEFQ…KKLIEIQYER (158 aa)). An ATP-binding site is contributed by 38–45 (GVTGSGKT). Residues 91-114 (YYDYYQPEAYVPQTDTFIEKDASI) carry the Beta-hairpin motif. The Helicase C-terminal domain occupies 429 to 595 (QIDDLYTEIQ…TINKEVRDLI (167 aa)). Residues 621–656 (KKLIKEYTEEMMLAAKNLQFERAAQLRDEIEELKGK) form the UVR domain.

This sequence belongs to the UvrB family. In terms of assembly, forms a heterotetramer with UvrA during the search for lesions. Interacts with UvrC in an incision complex.

The protein resides in the cytoplasm. Its function is as follows. The UvrABC repair system catalyzes the recognition and processing of DNA lesions. A damage recognition complex composed of 2 UvrA and 2 UvrB subunits scans DNA for abnormalities. Upon binding of the UvrA(2)B(2) complex to a putative damaged site, the DNA wraps around one UvrB monomer. DNA wrap is dependent on ATP binding by UvrB and probably causes local melting of the DNA helix, facilitating insertion of UvrB beta-hairpin between the DNA strands. Then UvrB probes one DNA strand for the presence of a lesion. If a lesion is found the UvrA subunits dissociate and the UvrB-DNA preincision complex is formed. This complex is subsequently bound by UvrC and the second UvrB is released. If no lesion is found, the DNA wraps around the other UvrB subunit that will check the other stand for damage. In Clostridium botulinum (strain Alaska E43 / Type E3), this protein is UvrABC system protein B.